Here is a 251-residue protein sequence, read N- to C-terminus: tRNA (guanine-N(7)-)-methyltransferase (251 aa).

Residues 1–29 (MTQTLSSQDPQAPAAPPMPGAAGSAPADV) form a disordered region. S-adenosyl-L-methionine contacts are provided by Glu84, Glu109, Asp136, and Asp159. Asp159 is an active-site residue. Lys163 contributes to the substrate binding site. The interval 165–170 (RHNKRR) is interaction with RNA. Residues Asp195 and 230–233 (TKFE) contribute to the substrate site.

Belongs to the class I-like SAM-binding methyltransferase superfamily. TrmB family.

The catalysed reaction is guanosine(46) in tRNA + S-adenosyl-L-methionine = N(7)-methylguanosine(46) in tRNA + S-adenosyl-L-homocysteine. It functions in the pathway tRNA modification; N(7)-methylguanine-tRNA biosynthesis. In terms of biological role, catalyzes the formation of N(7)-methylguanine at position 46 (m7G46) in tRNA. The protein is tRNA (guanine-N(7)-)-methyltransferase of Acidovorax sp. (strain JS42).